The sequence spans 246 residues: Small ribosomal subunit protein uS2 (246 aa).

This sequence belongs to the universal ribosomal protein uS2 family.

In Chromohalobacter salexigens (strain ATCC BAA-138 / DSM 3043 / CIP 106854 / NCIMB 13768 / 1H11), this protein is Small ribosomal subunit protein uS2.